The sequence spans 473 residues: uncharacterized protein (473 aa).

Residues 1 to 86 form a disordered region; it reads MSSSPTESEI…NTSNYGSSRD (86 aa). Residues 10–19 show a composition bias toward basic and acidic residues; the sequence is ILPKESHNSI. Polar residues-rich tracts occupy residues 20-39 and 55-68; these read DEQS…NSFN and EPVQ…PNMA. At Ser-64 the chain carries Phosphoserine. Residues 69–83 show a composition bias toward low complexity; sequence SNESGNSENTSNYGS. RRM domains follow at residues 95–165, 188–260, and 305–370; these read LWMG…NHLF, IFVG…PIRV, and VFVG…RIRL. A disordered region spans residues 448–473; it reads MHIPENGNSDTMPVPNTQGKHLSAEE. Over residues 453–467 the composition is skewed to polar residues; it reads NGNSDTMPVPNTQGK.

This is an uncharacterized protein from Schizosaccharomyces pombe (strain 972 / ATCC 24843) (Fission yeast).